The chain runs to 116 residues: Large ribosomal subunit protein bL19 (116 aa).

It belongs to the bacterial ribosomal protein bL19 family.

This protein is located at the 30S-50S ribosomal subunit interface and may play a role in the structure and function of the aminoacyl-tRNA binding site. In Flavobacterium johnsoniae (strain ATCC 17061 / DSM 2064 / JCM 8514 / BCRC 14874 / CCUG 350202 / NBRC 14942 / NCIMB 11054 / UW101) (Cytophaga johnsonae), this protein is Large ribosomal subunit protein bL19.